The sequence spans 421 residues: TITAN-like protein (421 aa).

The C2H2-type 1; degenerate zinc-finger motif lies at 11 to 32; that stretch reads EFCTVCRFHHDQGSRHKYFPRH. A C2H2-type 2; degenerate zinc finger spans residues 70–100; the sequence is VWCVFCDEDIVELGSSFACSKAINHFASSDH. Positions 279–306 are disordered; the sequence is ISSSHSTDAGGNVHSGAPPPWLDANDGD. Short sequence motifs (nuclear localization signal) lie at residues 328 to 335 and 377 to 384; these read NRKLNPNR and TRKESRKE. The segment at 376–421 is disordered; sequence GTRKESRKEFEKEKRKLVKTESISTESEPVKIQPYISKRARRESGE. Basic and acidic residues predominate over residues 377–389; sequence TRKESRKEFEKEK.

In terms of tissue distribution, also present in cotyledons, hypocotyls, stems, veins of sepals and stigmas, and actively dividing tissues such as shoot apical meristem, root tips and emerging true leaves. Weak expression in petals and anthers, and not detected in mature leaves. In seeds, expressed in both the endosperm and embryo.

It localises to the nucleus. In terms of biological role, key regulator for endosperm and embryo nuclear divisions. The protein is TITAN-like protein of Arabidopsis thaliana (Mouse-ear cress).